The following is a 411-amino-acid chain: Serine hydroxymethyltransferase (411 aa).

Residues leucine 113 and glycine 117 to leucine 119 each bind (6S)-5,6,7,8-tetrahydrofolate. Residue lysine 222 is modified to N6-(pyridoxal phosphate)lysine. (6S)-5,6,7,8-tetrahydrofolate contacts are provided by residues glutamate 238 and serine 346–phenylalanine 348.

It belongs to the SHMT family. As to quaternary structure, homodimer. It depends on pyridoxal 5'-phosphate as a cofactor.

Its subcellular location is the cytoplasm. The catalysed reaction is (6R)-5,10-methylene-5,6,7,8-tetrahydrofolate + glycine + H2O = (6S)-5,6,7,8-tetrahydrofolate + L-serine. It functions in the pathway one-carbon metabolism; tetrahydrofolate interconversion. Its pathway is amino-acid biosynthesis; glycine biosynthesis; glycine from L-serine: step 1/1. In terms of biological role, catalyzes the reversible interconversion of serine and glycine with tetrahydrofolate (THF) serving as the one-carbon carrier. This reaction serves as the major source of one-carbon groups required for the biosynthesis of purines, thymidylate, methionine, and other important biomolecules. Also exhibits THF-independent aldolase activity toward beta-hydroxyamino acids, producing glycine and aldehydes, via a retro-aldol mechanism. The sequence is that of Serine hydroxymethyltransferase from Prochlorococcus marinus (strain NATL1A).